A 236-amino-acid chain; its full sequence is Small ribosomal subunit protein eS6 (236 aa).

A phosphoserine mark is found at serine 232 and serine 233.

This sequence belongs to the eukaryotic ribosomal protein eS6 family. In terms of processing, phosphorylated.

In Eremothecium gossypii (strain ATCC 10895 / CBS 109.51 / FGSC 9923 / NRRL Y-1056) (Yeast), this protein is Small ribosomal subunit protein eS6 (RPS6).